Here is a 333-residue protein sequence, read N- to C-terminus: Transcription initiation factor IIB (333 aa).

The TFIIB-type zinc finger occupies 33–64; the sequence is EVYKCPICGNDKFVYNYERGEAVCIVCGAVVQ. Residues cysteine 37, cysteine 40, cysteine 56, and cysteine 59 each coordinate Zn(2+). 2 repeat units span residues 149–232 and 243–324.

It belongs to the TFIIB family.

Functionally, stabilizes TBP binding to an archaeal box-A promoter. Also responsible for recruiting RNA polymerase II to the pre-initiation complex (DNA-TBP-TFIIB). The sequence is that of Transcription initiation factor IIB from Pyrobaculum aerophilum (strain ATCC 51768 / DSM 7523 / JCM 9630 / CIP 104966 / NBRC 100827 / IM2).